A 376-amino-acid chain; its full sequence is Putative clathrin assembly protein At1g25240 (376 aa).

The 132-residue stretch at 25 to 156 (KTSFRNPDLD…FFLSDQIRRR (132 aa)) folds into the ENTH domain.

It localises to the membrane. Its subcellular location is the clathrin-coated pit. It is found in the golgi apparatus. The protein localises to the cytoplasmic vesicle. The protein resides in the clathrin-coated vesicle. This Arabidopsis thaliana (Mouse-ear cress) protein is Putative clathrin assembly protein At1g25240.